A 436-amino-acid chain; its full sequence is Na(+)/H(+) antiporter NhaA 1 (436 aa).

11 helical membrane-spanning segments follow: residues 35–55, 80–100, 116–136, 147–167, 176–196, 201–221, 226–246, 283–303, 313–333, 354–374, and 385–405; these read FGGG…NSPW, LATW…GLEL, ALPV…YVGV, GWAI…AVIG, AFLL…IAIF, FKLT…LLVQ, WWWA…ESGV, VSAG…SLRG, PIVV…IFGS, LLGV…IGEL, and VKAA…IVLI.

The protein belongs to the NhaA Na(+)/H(+) (TC 2.A.33) antiporter family.

The protein localises to the cell membrane. The catalysed reaction is Na(+)(in) + 2 H(+)(out) = Na(+)(out) + 2 H(+)(in). Functionally, na(+)/H(+) antiporter that extrudes sodium in exchange for external protons. The polypeptide is Na(+)/H(+) antiporter NhaA 1 (Salinispora tropica (strain ATCC BAA-916 / DSM 44818 / JCM 13857 / NBRC 105044 / CNB-440)).